We begin with the raw amino-acid sequence, 504 residues long: MIIFREQLIALLPIIVIGITIVGIMLSIIYSRNQFKHAVLTIIGMIIASVSSLLHMMWSMNKSGQNFFQLICIDNFSVLYVILIMFVGIASSILGYVWLVYYPVYRSDEFYLLLLIASIGGILLVITNHLIVLFLGIELISISICGLISYPVFSKKSIELSIKYIILSGVSSSFLLFGIVFIYCKTGSLSFIDIKEILSTYNNVNHMLSQPSMTLIVIGLSMMMIGMGFKLSCVPFHLWISDIYQGTPTAVSMYLATGSKIAVTAVLMRFLLILPDQYNELLHIFLSVSACCSMLFGSLMAIPQISIKRMLAYSSITNAGYLLIALIALRMNNCAIIQESISVYLVSYLFANVGVWGIVNIVSTAYIQKEKNDADTIYLYHGLFWREPMLSVIFVIAILSLAGIPMTFGFIGKFYLLFIGISNQLWFLTVMMIISSIISMFYYLKIITNLFNSNFVNNTNINYDILKKWMIKPEGFMVIIVAIIILFFGVYPQFIVNLIQQFVI.

Transmembrane regions (helical) follow at residues 9 to 29 (IALL…LSII), 38 to 58 (AVLT…HMMW), 78 to 98 (VLYV…GYVW), 114 to 134 (LLIA…IVLF), 135 to 155 (LGIE…VFSK), 164 to 184 (YIIL…FIYC), 216 to 236 (IVIG…CVPF), 254 to 274 (YLAT…LLIL), 282 to 302 (LHIF…LMAI), 309 to 329 (RMLA…LIAL), 341 to 361 (ISVY…IVNI), 392 to 412 (VIFV…GFIG), 425 to 447 (LWFL…LKII), and 476 to 496 (FMVI…QFIV).

This sequence belongs to the complex I subunit 2 family. NDH-1 is composed of 13 different subunits. Subunits NuoA, H, J, K, L, M, N constitute the membrane sector of the complex.

It localises to the cell inner membrane. The enzyme catalyses a quinone + NADH + 5 H(+)(in) = a quinol + NAD(+) + 4 H(+)(out). In terms of biological role, NDH-1 shuttles electrons from NADH, via FMN and iron-sulfur (Fe-S) centers, to quinones in the respiratory chain. The immediate electron acceptor for the enzyme in this species is believed to be ubiquinone. Couples the redox reaction to proton translocation (for every two electrons transferred, four hydrogen ions are translocated across the cytoplasmic membrane), and thus conserves the redox energy in a proton gradient. This Blochmanniella floridana protein is NADH-quinone oxidoreductase subunit N.